The sequence spans 308 residues: Elongation factor Ts (308 aa).

The interval 80 to 83 is involved in Mg(2+) ion dislocation from EF-Tu; sequence TDFV.

Belongs to the EF-Ts family.

The protein localises to the cytoplasm. Functionally, associates with the EF-Tu.GDP complex and induces the exchange of GDP to GTP. It remains bound to the aminoacyl-tRNA.EF-Tu.GTP complex up to the GTP hydrolysis stage on the ribosome. This is Elongation factor Ts from Methylobacterium radiotolerans (strain ATCC 27329 / DSM 1819 / JCM 2831 / NBRC 15690 / NCIMB 10815 / 0-1).